Reading from the N-terminus, the 103-residue chain is Histone H4.2 (103 aa).

Residues 1–14 (MTGRGKGGKGLGKG) are compositionally biased toward gly residues. The interval 1–20 (MTGRGKGGKGLGKGGAKRHR) is disordered. At lysine 6 the chain carries N6-acetyl-N6-methyllysine; alternate. An N6-methyllysine; alternate mark is found at lysine 6, lysine 9, and lysine 13. Lysine 13 carries the post-translational modification N6-acetyl-N6-methyllysine; alternate. Residues 17 to 21 (KRHRK) mediate DNA binding. Residue lysine 92 is modified to N6-glutaryllysine.

It belongs to the histone H4 family. In terms of assembly, the nucleosome is a histone octamer containing two molecules each of H2A, H2B, H3 and H4 assembled in one H3-H4 heterotetramer and two H2A-H2B heterodimers. The octamer wraps approximately 147 bp of DNA. Glutarylation at Lys-92 (H4K91glu) destabilizes nucleosomes by promoting dissociation of the H2A-H2B dimers from nucleosomes.

It localises to the nucleus. It is found in the chromosome. Its function is as follows. Core component of nucleosome. Nucleosomes wrap and compact DNA into chromatin, limiting DNA accessibility to the cellular machineries which require DNA as a template. Histones thereby play a central role in transcription regulation, DNA repair, DNA replication and chromosomal stability. DNA accessibility is regulated via a complex set of post-translational modifications of histones, also called histone code, and nucleosome remodeling. In Talaromyces funiculosus (Fruitlet core rot fungus), this protein is Histone H4.2 (H4.2).